The sequence spans 545 residues: CTP synthase (545 aa).

Residues methionine 1–leucine 265 form an amidoligase domain region. Serine 15 contributes to the CTP binding site. Residue serine 15 participates in UTP binding. ATP-binding positions include serine 16–leucine 21 and aspartate 73. Mg(2+) contacts are provided by aspartate 73 and glutamate 141. Residues aspartate 148–glutamate 150, lysine 188–glutamine 193, and lysine 224 each bind CTP. Residues lysine 188–glutamine 193 and lysine 224 each bind UTP. Residues glutamate 290–isoleucine 534 enclose the Glutamine amidotransferase type-1 domain. Residue glycine 349 coordinates L-glutamine. Cysteine 376 functions as the Nucleophile; for glutamine hydrolysis in the catalytic mechanism. L-glutamine is bound by residues leucine 377–glutamine 380, glutamate 400, and arginine 460. Residues histidine 507 and glutamate 509 contribute to the active site.

This sequence belongs to the CTP synthase family. Homotetramer.

It catalyses the reaction UTP + L-glutamine + ATP + H2O = CTP + L-glutamate + ADP + phosphate + 2 H(+). The enzyme catalyses L-glutamine + H2O = L-glutamate + NH4(+). The catalysed reaction is UTP + NH4(+) + ATP = CTP + ADP + phosphate + 2 H(+). It participates in pyrimidine metabolism; CTP biosynthesis via de novo pathway; CTP from UDP: step 2/2. With respect to regulation, allosterically activated by GTP, when glutamine is the substrate; GTP has no effect on the reaction when ammonia is the substrate. The allosteric effector GTP functions by stabilizing the protein conformation that binds the tetrahedral intermediate(s) formed during glutamine hydrolysis. Inhibited by the product CTP, via allosteric rather than competitive inhibition. Its function is as follows. Catalyzes the ATP-dependent amination of UTP to CTP with either L-glutamine or ammonia as the source of nitrogen. Regulates intracellular CTP levels through interactions with the four ribonucleotide triphosphates. This Tropheryma whipplei (strain Twist) (Whipple's bacillus) protein is CTP synthase.